We begin with the raw amino-acid sequence, 150 residues long: Probable FKBP-type 16 kDa peptidyl-prolyl cis-trans isomerase (150 aa).

In terms of domain architecture, PPIase FKBP-type spans Asn14–Pro88.

This sequence belongs to the FKBP-type PPIase family.

The enzyme catalyses [protein]-peptidylproline (omega=180) = [protein]-peptidylproline (omega=0). Its function is as follows. PPIases accelerate the folding of proteins. The chain is Probable FKBP-type 16 kDa peptidyl-prolyl cis-trans isomerase (yaaD) from Pseudomonas fluorescens.